Here is a 249-residue protein sequence, read N- to C-terminus: 1-(5-phosphoribosyl)-5-[(5-phosphoribosylamino)methylideneamino] imidazole-4-carboxamide isomerase (249 aa).

Catalysis depends on D11, which acts as the Proton acceptor. The Proton donor role is filled by D133.

The protein belongs to the HisA/HisF family.

The protein resides in the cytoplasm. It catalyses the reaction 1-(5-phospho-beta-D-ribosyl)-5-[(5-phospho-beta-D-ribosylamino)methylideneamino]imidazole-4-carboxamide = 5-[(5-phospho-1-deoxy-D-ribulos-1-ylimino)methylamino]-1-(5-phospho-beta-D-ribosyl)imidazole-4-carboxamide. It participates in amino-acid biosynthesis; L-histidine biosynthesis; L-histidine from 5-phospho-alpha-D-ribose 1-diphosphate: step 4/9. The protein is 1-(5-phosphoribosyl)-5-[(5-phosphoribosylamino)methylideneamino] imidazole-4-carboxamide isomerase of Actinobacillus succinogenes (strain ATCC 55618 / DSM 22257 / CCUG 43843 / 130Z).